A 7094-amino-acid polypeptide reads, in one-letter code: MSKINKYGLELHWAPEFPWMFEDAEEKLDNPSSSEVDIVCSTTAQKLETGGICPENHVMVDCRRLLKQECCVQSSLIREIVMNTRPYDLEVLLQDALQSREAVLVTPPLGMSLEACYVRGCNPNGWTMGLFRRRSVCNTGRCAVNKHVAYQLYMIDPAGVCFGAGQFVGWVIPLAFMPVQSRKFIVPWVMYLRKCGEKGAYNKDHKRGGFEHVYNFKVEDAYDLVHDEPKGKFSKKAYALIRGYRGVKPLLYVDQYGCDYTGGLADGLEAYADKTLQEMKALFPIWSQELPFDVTVAWHVVRDPRYVMRLQSASTIRSVAYVANPTEDLCDGSVVIKEPVHVYADDSIILRQHNLVDIMSCFYMEADAVVNAFYGVDLKDCGFVMQFGYIDCEQDLCDFKGWVPGNMIDGFACTTCGHVYETGDLLAQSSGVLPVNPVLHTKSAAGYGGFGCKDSFTLYGQTVVYFGGCVYWSPARNIWIPILKSSVKSYDGLVYTGVVGCKAIVKETNLICKALYLDYVQHKCGNLHQRELLGVSDVWHKQLLLNRGVYKPLLENIDYFNMRRAKFSLETFTVCADGFMPFLLDDLVPRAYYLAVSGQAFCDYAGKICHAVVSKSKELLDVSLDSLGAAIHYLNSKIVDLAQHFSDFGTSFVSKIVHFFKTFTTSTALAFAWVLFHVLHGAYIVVESDIYFVKNIPRYASAVAQAFRSVAKVVLDSLRVTFIDGLSCFKIGRRRICLSGSKIYEVERGLLHSSQLPLDVYDLTMPSQVQKTKQKPIYLKGSGSDFSLADSVVEVVTTSLTPCGYSEPPKVADKICIVDNVYMAKAGDKYYPVVVDGHVGLLDQAWRVPCAGRCVTFKEQPTVNEIASTPKTIKVFYELDKDFNTILNTACGVFEVDDTVDMEEFYAVVIDAIEEKLSPCKELEGVGAKVSAFLQKLEDNSLFLFDEAGEEVLAPKLYCAFTAPEDDDFLEESGVEEDDVEGEETDLTVTSAGEPCVASEQEESSEILEDTLDDGPCVETSDSQVEEDVQMSDFVDLESVIQDYENVCFEFYTTEPEFVKVLDLYVPKATRNNCWLRSVLAVMQKLPCQFKDKNLQDLWVLYKQQYSQLFVDTLVNKIPANIVVPQGGYVADFAYWFLTLCDWQCVAYWKCIKCDLALKLKGLDAMFFYGDVVSHVCKCGESMVLIDVDVPFTAHFALKDKLFCAFITKRSVYKAACVVDVNDSHSMAVVDGKQIDDHRITSITSDKFDFIIGHGMSFSMTTFEIAQLYGSCITPNVCFVKGDIIKVSKRVKAEVVVNPANGHMAHGGGVAKAIAVAAGQQFVKETTDMVKSKGVCATGDCYVSTGGKLCKTVLNVVGPDARTQGKQSYALLERVYKHLNKYDCVVTTLISAGIFSVPSDVSLTYLLGTAKKQVVLVSNNQEDFDLISKCQITAVEGTKKLAERLSFNVGRSIVYETDANKLILSNDVAFVSTFNVLQDVLSLRHDIALDDDARTFVQSNVDVVPEGWRVVNKFYQINGVRTVKYFECPGGIDICSQDKVFGYVQQGSFNKATVAQIKALFLDKVDILLTVDGVNFTNRFVPVGESFGKSLGNVFCDGVNVTKHKCDINYKGKVFFQFDNLSSEDLKAVRSSFNFDQKELLAYYNMLVNCSKWQVVFNGKYFTFKQANNNCFVNVSCLMLQSLNLKFKIVQWQEAWLEFRSGRPARFVSLVLAKGGFKFGDPADSRDFLRVVFSQVDLTGAICDFEIACKCGVKQEQRTGVDAVMHFGTLSREDLEIGYTVDCSCGKKLIHCVRFDVPFLICSNTPASVKLPKGVGSANIFKGDKVGHYVHVKCEQSYQLYDASNVKKVTDVTGNLSDCLYLKNLKQTFKSVLTTYYLDDVKKIEYKPDLSQYYCDGGKYYTQRIIKAQFKTFEKVDGVYTNFKLIGHTVCDILNAKLGFDSSKEFVEYKVTEWPTATGDVVLATDDLYVKRYERGCITFGKPVIWLSHEQASLNSLTYFNRPLLVDENKFDVLKVDDVDDGGDISESDAKEPKEINIIKLSGVKKPFKVEDSVIVNDDTSEIKYVKSLSIVDVYDMWLTGCRCVVRTANALSRAVNVPTIRKFIKFGMTLVSIPIDLLNLREIKPVFNVVKAVRNKISACFNFIKWLFVLLFGWIKISADNKVIYTTEVASKLTCKLVALAFKNAFLTFKWSVVARGACIIATIFLLWFNFIYANVIFSDFYLPKIGFLPTFVGKIAQWIKNTFSLVTICDLYSIQDVGFKNQYCNGSIACQFCLAGFDMLDNYKAIDVVQYEADRRAFVDYTGVLKIVIELIVSYALYTAWFYPLFALISIQILTTWLPELFMLSTLHWSVRLLVSLANMLPAHVFMRFYIIIASFIKLFSLFRHVAYGCSKSGCLFCYKRNRSLRVKCSTIVGGMIRYYDAMANGGTGFCSKHQWNCIDCDSYKPGNTFITVEAALDLSKELKRPIQPTDVAYHTVTDVKQVGCYMRLFYDRDGQRTYDDVNASLFVDYSNLLHSKVKSVPNMHVVVVENDADKANFLNAAVFYAQSLFRPILMVDKNLITTANTGTSVTETMFDVYVDTFLSMFDVDKKSLNALIATAHSSIKQGTQICKVLDTFLSCARKSCSIDSDVDTKCLADSVMSAVSAGLELTDESCNNLVPTYLKGDNIVAADLGVLIQNSAKHVQGNVAKIAGVSCIWSVDAFNQLSSDFQHKLKKACCKTGLKLKLTYNKQMANVSVLTTPFSLKGGAVFSYFVYVCFVLSLVCFIGLWCLMPTYTVHKSDFQLPVYASYKVLDNGVIRDVSVEDVCFANKFEQFDQWYESTFGLSYYSNSMACPIVVAVVDQDFGSTVFNVPTKVLRYGYHVLHFITHALSADGVQCYTPHSQISYSNFYASGCVLSSACTMFAMADGSPQPYCYTDGLMQNASLYSSLVPHVRYNLANAKGFIRFPEVLREGLVRIVRTRSMPYCRVGLCEEADEGICFNFNGSWVLNNDYYRSLPGTFCGRDVFDLIYQLFKGLAQPVDFLALTASSIAGAILAVIVVLVFYYLIKLKRAFGDYTSIVFVNVIVWCVNFMMLFVFQVYPTLSCVYAICYFYATLYFPSEISVIMHLQWLVMYGTIMPLWFCLLYISVVVSNHAFWVFSYCRQLGTSVRSDGTFEEMALTTFMITKDSYCKLKNSLSDVAFNRYLSLYNKYRYYSGKMDTAAYREAACSQLAKAMDTFTNNNGSDVLYQPPTASVSTSFLQSGIVKMVNPTSKVEPCIVSVTYGNMTLNGLWLGDKVYCPRHVICSASDMTNPDYTNLLCRVTSSDFTVLFDRLSLTVMSYQMQGCMLVLTVTLQNSRTPKYTFGVVKPGETFTVLAAYNGKPQGAFHVTMRSSYTIKGSFLCGSCGSVVYVIMGDCVKFVYMHQLELSTGCHTGTDFNGDFYGPYKDAQVVQLPVQDYIQSVNFVAWLYAAILNNCNWFVQSDKCSVEDFNVWALSNGFSQVKSDLVIDALASMTGVSLETLLAAIKHLKNGFQGRQIMGSCSFEDELTPSDVYQQLAGIKLQSKRTRLVKGIVCWIMASTFLFSCIITAFVKWTMFMYVTTNMLSITFCALCVISLTMLLVKHKHLYLTMYIIPVLFTLLYNNYLVVYKQTFRGYVYAWLSYYVPSVEYTYTDEVIYGMLLLIGMVFVTLRSINQYLFSFIMFVGRVISVVSLWYMGSNLEEEILLMLASLFGTYTWTTALSMAAAKVIAKWVAVNVLYFTDIPQIKIVLVCYLFIGYIISCYWGLFSLMNSLFRMPLGVYNYKISVQELRYMNANGLRPPKNSFEALMLNFKLLGIGGVPIIEVSQFQSKLTDVKCANVVLLNCLQHLHVASNSKLWQYCSTLHNEILATSDLGVAFEKLAQLLIVLFANPAAVDSKCLTSIEEVCDDYAKDNTVLQALQSEFVNMASFVEYEVAKKNLDEACSSGSANQQQLKQLEKACNIAKSAYERDRAVARKLERMADLALTNMYKEARINDKKSKVVSALQTMLFSMVRKLDNQALNSILDNAVKGCVPLNAIPSLAANTLTIIVPDKSVYDQVVDNVYVTYAGNVWQIQTIQDSDGTNKQLHEISDDCNWPLVIIANRHNEVSATALQNNELMPAKLKTQVVNSGPDQTCNTPTQCYYNNSYNGKIVYAILSDVDGLKYTKILKDDGNFVVLELDPPCKFTVQDVKGLKIKYLYFVKGCNTLARGWVVGTISSTVRLQAGTATEYASNSSILSLCAFSVDPKKTYLDFIQQGGTPIANCVKMLCDHAGTGMAITVKPDATTSQDSYGGASVCIYCRARVEHPDVDGLCKLRGKFVQVPVGIKDPVSYVLTHDVCQVCGFWRDGSCSCVSTDTTVQSKDTNFLNRVRGTSVDARLVPCASGLSTDVQLRAFDICNASVAGIGLHLKVNCCRFQRVDENGDKLDQFFVVKRTDLTIYNREMECYERVKDCKFVAEHDFFTFDVEGSRVPHIVRKDLTKYTMLDLCYALRHFDRNDCMLLCDILSIYAGCEQSYFTKKDWYDFVENPDIINVYKKLGPIFNRALVSATEFADKLVEVGLVGILTLDNQDLNGKWYDFGDYVIAAPGCGVAIADSYYSYMMPMLTMCHALDCELYVNNAYRLFDLVQYDFTDYKLELFNKYFKHWSMPYHPNTVDCQDDRCIIRCANFNILFSMVLPNTCFGPLVRQIFVDGVPFVVSIGYHYKELGIVMNMDVDTHRYRLSLKDLLLYAADPALHVASASALYDLRTCCFSVAAITSGVKFQTVKPGNFNQDFYDFILSKGLLKEGSSVDLKHFFFTQDGNAAITDYNYYKYNLPTMVDIKQLLFVLEVVYKYFEIYDGGCIPASQVIVNNYDKSAGYPFNKFGKARLYYEALSFEEQDEIYAYTKRNVLPTLTQMNLKYAISAKNRARTVAGVSILSTMTGRMFHQKCLKSIAATRGVPVVIGTTKFYGGWDDMLRRLIKDVDNPVLMGWDYPKCDRAMPNILRIVSSLVLARKHEACCSQSDRFYRLANEYAQVLSEIVMCGGCYYVKPGGTSSGDATTAFANSVFNICQAVSANVCALMSCNGNKIEDLSIRALQKRLYSHVYRSDMVDSTFVTEYYEFLNKHFSMMILSDDGVVCYNSDYASKGYIANISAFQQVLYYQNNVFMSESKCWVENDINNGPHEFCSQHTMLVKMDGDDVYLPYPDPSRILGAGCFVDDLLKTDSVLLIERFVSLAIDAYPLVYHENEEYQKVFRVYLEYIKKLYNELGNQILDSYSVILSTCDGQKFTDESFYKNMYLRSAVMQSVGACVVCSSQTSLRCGSCIRKPLLCCKCCYDHVMATDHKYVLSVSPYVCNAPGCDVNDVTKLYLGGMSYYCEDHKPQYSFKLVMNGMVFGLYKQSCTGSPYIDDFNRIASCKWTDVDDYILANECTERLKLFAAETQKATEEAFKQSYASATIQEIVSERELILSWEIGKVKPPLNKNYVFTGYHFTKNGKTVLGEYVFDKSELTNGVYYRATTTYKLSVGDVFVLTSHSVANLSAPTLVPQENYSSIRFASVYSVLETFQNNVVNYQHIGMKRYCTVQGPPGTGKSHLAIGLAVYYCTARVVYTAASHAAVDALCEKAYKFLNINDCTRIVPAKVRVECYDKFKINDTTRKYVFTTINALPEMVTDIVVVDEVSMLTNYELSVINARIRAKHYVYIGDPAQLPAPRVLLSKGTLEPKYFNTVTKLMCCLGPDIFLGTCYRCPKEIVDTVSALVYENKLKAKNESSSLCFKVYYKGVTTHESSSAVNMQQIYLINKFLKANPLWHKAVFISPYNSQNFAARRVLGLQTQTVDSAQGSEYDYVIYSQTAETAHSVNVNRFNVAITRAKKGILCVMSNMQLFEALQFTTLTVDKVPQAVETRVQCSTNLFKDCSKSYSGYHPAHAPSFLAVDDKYKATGDLAVCLGIGDSAVTYSRLTSLMGFKLDVTLDGYCKLFITKEEAVKRVRAWVGFDAEGAHATRDSIGTNFPLQLGFSTGIDFVVEATGLFADRDGYSFKKAVAKAPPGEQFKHLIPLMTRGQRWDVVRPRIVQMFADHLIDLSDCVVLVTWAANFELTCLRYFAKVGREISCNVCTKRATAYNSRTGYYGCWRHSVTCDYLYNPLIVDIQQWGYIGSLSSNHDLYCSVHKGAHVASSDAIMTRCLAVYDCFCNNINWNVEYPIISNELSINTSCRVLQRVMLKAAMLCNRYTLCYDIGNPKAIACVKDFDFKFYDAQPIVKSVKTLLYFFEAHKDSFKDGLCMFWNCNVDKYPPNAVVCRFDTRVLNNLNLPGCNGGSLYVNKHAFHTKPFSRAAFEHLKPMPFFYYSDTPCVYMDGMDAKQVDYVPLKSATCITRCNLVGAVCLKHAEEYREYLNSYNTATTAGFTFWVYKTFDFYNLWNTFTKLQSLENVVYNLVKTGHYTGQAGEMPCAIINDKVVAKIDKEDVVIFINNTTYPTNVAVELFAKRSIRHHPELKLFRNLNIDVCWKHVIWDYARESIFCSNTYGVCMYTDLKFIDKLNVLFDGRDNGALEAFKRSNNGVYISTTKVKSLSMIRGPPRAELNGVVVDKVGDTDCVFYFAVRKEGQDVIFSQFDSLRVSSNQSPQGNLGSNEPGNVGGNDALATSTIFTQSRVISSFTCRTDMEKDFIALDQDVFIQKYGLEDYAFEHIVYGNFNQKIIGGLHLLIGLYRRQQTSNLVIQEFVSYDSSIHSYFITDEKSGGSKSVCTVIDILLDDFVALVKSLNLNCVSKVVNVNVDFKDFQFMLWCNDEKVMTFYLRLQAASDWKPGYSMPVLYKYLNSPMERVSLWNYGKPVTLPTGCMMNVAKYTQLCQYLNTTTLAVPVNMRVLHLGAGSEKGVAPGSAVLRQWLPAGTILVDNDLYPFVSDSVATYFGDCITLPFDCQWDLIISDMYDPITKNIGEYNVSKDGFFTYICHMIRDKLALGGSVAIKITEFSWNAELYKLMGYFAFWTVFCTNANASSSEGFLIGINYLGKPKVEIDGNVMHANYLFWRNSTVWNGGAYSLFDMAKFPLKLAGTAVINLRADQINDMVYSLLEKGKLLVRDTNKEVFVGDSMVNVI.

Positions 54–196 (PENHVMVDCR…PWVMYLRKCG (143 aa)) constitute a CoV Nsp1 globular domain. The 31-residue stretch at 216–246 (FKVEDAYDLVHDEPKGKFSKKAYALIRGYRG) folds into the BetaCoV Nsp1 C-terminal domain. A CoV Nsp2 N-terminal domain is found at 250–519 (LLYVDQYGCD…LICKALYLDY (270 aa)). Positions 392, 397, 413, and 416 each coordinate Zn(2+). Positions 392–416 (CEQDLCDFKGWVPGNMIDGFACTTC) are C4. Residues 524–713 (CGNLHQRELL…AQAFRSVAKV (190 aa)) enclose the CoV Nsp2 middle domain. The CoV Nsp2 C-terminal domain maps to 733–851 (RRRICLSGSK…LDQAWRVPCA (119 aa)). The Ubiquitin-like 1 domain occupies 853 to 966 (RCVTFKEQPT…LYCAFTAPED (114 aa)). Residues 972–986 (ESGVEEDDVEGEETD) are compositionally biased toward acidic residues. The segment at 972–992 (ESGVEEDDVEGEETDLTVTSA) is disordered. The Peptidase C16 1 domain occupies 1036–1274 (DLESVIQDYE…IAQLYGSCIT (239 aa)). Residue Cys-1074 is the For PL1-PRO activity of the active site. Positions 1151, 1154, 1177, and 1179 each coordinate Zn(2+). The segment at 1151–1179 (CIKCDLALKLKGLDAMFFYGDVVSHVCKC) adopts a C4-type 1 zinc-finger fold. Catalysis depends on for PL1-PRO activity residues His-1225 and Asp-1236. Residues 1275–1435 (PNVCFVKGDI…LISKCQITAV (161 aa)) form the Macro domain. The region spanning 1491-1563 (DDARTFVQSN…VAQIKALFLD (73 aa)) is the DPUP domain. The Ubiquitin-like 2 domain maps to 1562-1617 (LDKVDILLTVDGVNFTNRFVPVGESFGKSLGNVFCDGVNVTKHKCDINYKGKVFFQ). Residues 1631–1892 (SSFNFDQKEL…KIEYKPDLSQ (262 aa)) form the Peptidase C16 2 domain. Cys-1671 (for PL2-PRO activity) is an active-site residue. 4 residues coordinate Zn(2+): Cys-1749, Cys-1751, Cys-1783, and Cys-1785. A C4-type 2 zinc finger spans residues 1749–1785 (CKCGVKQEQRTGVDAVMHFGTLSREDLEIGYTVDCSC). Catalysis depends on for PL2-PRO activity residues His-1828 and Asp-1842. The 102-residue stretch at 1906 to 2007 (IKAQFKTFEK…TYFNRPLLVD (102 aa)) folds into the Nucleic acid-binding domain. One can recognise a G2M domain in the interval 2020–2169 (DDGGDISESD…ADNKVIYTTE (150 aa)). The next 3 membrane-spanning stretches (helical) occupy residues 2138–2158 (ISAC…WIKI), 2199–2219 (ACII…NVIF), and 2221–2241 (DFYL…AQWI). Positions 2138–2385 (ISACFNFIKW…ASFIKLFSLF (248 aa)) are HD1. The 62-residue stretch at 2235–2296 (GKIAQWIKNT…AIDVVQYEAD (62 aa)) folds into the 3Ecto domain. 2 cysteine pairs are disulfide-bonded: Cys-2251/Cys-2275 and Cys-2266/Cys-2272. The next 3 membrane-spanning stretches (helical) occupy residues 2313–2333 (LIVS…LISI), 2343–2363 (LFML…ANML), and 2365–2385 (AHVF…FSLF). Residues 2383–2473 (SLFRHVAYGC…ELKRPIQPTD (91 aa)) form a Y1 region. In terms of domain architecture, CoV Nsp3 Y spans 2383-2750 (SLFRHVAYGC…LTTPFSLKGG (368 aa)). The Zn(2+) site is built by His-2387, Cys-2392, Cys-2397, Cys-2400, Cys-2433, His-2436, Cys-2440, and Cys-2443. Positions 2387–2400 (HVAYGCSKSGCLFC) are ZF1. The interval 2433–2443 (CSKHQWNCIDC) is ZF2. Residues 2474-2566 (VAYHTVTDVK…MVDKNLITTA (93 aa)) are Y2. A coV-Y region spans residues 2474 to 2750 (VAYHTVTDVK…LTTPFSLKGG (277 aa)). Residues 2567–2649 (NTGTSVTETM…DSVMSAVSAG (83 aa)) form a Y3 region. The Y4 stretch occupies residues 2650–2750 (LELTDESCNN…LTTPFSLKGG (101 aa)). 5 consecutive transmembrane segments (helical) span residues 2752–2772 (VFSY…IGLW), 3031–3051 (ASSI…YYLI), 3063–3083 (IVFV…VFQV), 3090–3110 (VYAI…SVIM), and 3115–3135 (LVMY…SVVV). Residues 2752-3135 (VFSYFVYVCF…FCLLYISVVV (384 aa)) are HD2. Residues 3149–3246 (LGTSVRSDGT…TASVSTSFLQ (98 aa)) form the Nsp4C domain. The 303-residue stretch at 3247–3549 (SGIVKMVNPT…YQQLAGIKLQ (303 aa)) folds into the Peptidase C30 domain. Active-site for 3CL-PRO activity residues include His-3287 and Cys-3391. The next 7 helical transmembrane spans lie at 3558–3578 (GIVC…TAFV), 3588–3608 (TNML…MLLV), 3615–3635 (LTMY…LVVY), 3657–3677 (TYTD…FVTL), 3684–3704 (LFSF…WYMG), 3711–3731 (ILLM…LSMA), and 3755–3775 (IVLV…GLFS). Positions 3558-3775 (GIVCWIMAST…IISCYWGLFS (218 aa)) are HD3. The 89-residue stretch at 3837-3925 (SKLTDVKCAN…DYAKDNTVLQ (89 aa)) folds into the RdRp Nsp7 cofactor domain. Residues 3926-4122 (ALQSEFVNMA…HNEVSATALQ (197 aa)) enclose the RdRp Nsp8 cofactor domain. In terms of domain architecture, Nsp9 ssRNA-binding spans 4123-4232 (NNELMPAKLK…GTISSTVRLQ (110 aa)). The 138-residue stretch at 4233–4370 (AGTATEYASN…CVSTDTTVQS (138 aa)) folds into the ExoN/MTase coactivator domain. Cys-4306, Cys-4309, His-4315, Cys-4322, Cys-4348, Cys-4351, Cys-4359, and Cys-4361 together coordinate Zn(2+). 2 zinc fingers span residues 4306–4322 (CIYC…DGLC) and 4348–4361 (CQVC…SCSC). In terms of domain architecture, NiRAN spans 4375–4630 (FLNRVRGTSV…DCELYVNNAY (256 aa)). Mn(2+)-binding residues include Asn-4578 and Asp-4587. The Nsp12 Interface domain maps to 4631–4729 (RLFDLVQYDF…MNMDVDTHRY (99 aa)). Positions 4660, 4666, 4671, 4675, and 4852 each coordinate Zn(2+). The Nsp12 RNA-dependent RNA polymerase domain occupies 4730–5297 (RLSLKDLLLY…NMYLRSAVMQ (568 aa)). The rdRp Fingers N-ter stretch occupies residues 4732–4946 (SLKDLLLYAA…HQKCLKSIAA (215 aa)). A rdRp Palm N-ter region spans residues 4947-4985 (TRGVPVVIGTTKFYGGWDDMLRRLIKDVDNPVLMGWDYP). The region spanning 4977 to 5139 (PVLMGWDYPK…CYNSDYASKG (163 aa)) is the RdRp catalytic domain. Residues 4986–5044 (KCDRAMPNILRIVSSLVLARKHEACCSQSDRFYRLANEYAQVLSEIVMCGGCYYVKPGG) are rdRp Fingers C-ter. Zn(2+) is bound by residues His-5007, Cys-5010, and Cys-5011. The segment at 5045-5180 (TSSGDATTAF…NNGPHEFCSQ (136 aa)) is rdRp Palm C-ter. Catalysis depends on residues Ser-5124, Asp-5125, and Asp-5126. The rdRp Thumb stretch occupies residues 5181–5297 (HTMLVKMDGD…NMYLRSAVMQ (117 aa)). Residues 5298–5410 (SVGACVVCSS…DDFNRIASCK (113 aa)) form the CV ZBD domain. Residues Cys-5302, Cys-5305, Cys-5313, Cys-5316, Cys-5323, Cys-5326, His-5330, His-5336, Cys-5347, Cys-5352, Cys-5369, and His-5372 each contribute to the Zn(2+) site. The (+)RNA virus helicase ATP-binding domain maps to 5553–5734 (SVLETFQNNV…MCCLGPDIFL (182 aa)). Residue 5578–5585 (GPPGTGKS) participates in ATP binding. The (+)RNA virus helicase C-terminal domain occupies 5735-5904 (GTCYRCPKEI…VETRVQCSTN (170 aa)). One can recognise an ExoN domain in the interval 5971–6186 (LFITKEEAVK…RCLAVYDCFC (216 aa)). Catalysis depends on residues Asp-5989, Glu-5991, and Glu-6090. Zn(2+) is bound by residues Cys-6106, Cys-6109, Cys-6125, His-6128, His-6156, Cys-6160, and His-6163. Catalysis depends on residues His-6167 and Asp-6172. A Zn(2+)-binding site is contributed by Cys-6178. The region spanning 6195-6421 (YPIISNELSI…NLWNTFTKLQ (227 aa)) is the N7-MTase domain. Residue 6230–6236 (DIGNPKA) coordinates S-adenosyl-L-methionine. Residues 6308 to 6322 (CNGGSLYVNKHAFHT) are gpppA-binding. The Zn(2+) site is built by Cys-6346, Cys-6367, Cys-6378, and His-6381. The region spanning 6422–6482 (SLENVVYNLV…NVAVELFAKR (61 aa)) is the Nsp15 N-terminal oligomerization domain. The region spanning 6483 to 6603 (SIRHHPELKL…FAVRKEGQDV (121 aa)) is the AV-Nsp11N/CoV-Nsp15M domain. In terms of domain architecture, NendoU spans 6653 to 6792 (TCRTDMEKDF…NDEKVMTFYL (140 aa)). Catalysis depends on residues His-6683, His-6698, Lys-6738, Lys-6841, Asp-6925, Lys-6965, and Glu-6998. The 295-residue stretch at 6797–7091 (ASDWKPGYSM…KEVFVGDSMV (295 aa)) folds into the Nidovirus-type SAM-dependent 2'-O-MTase domain.

It belongs to the coronaviruses polyprotein 1ab family. Interacts with host PHB and PHB2. As to quaternary structure, interacts with papain-like protease nsp3 and non-structural protein 6. In terms of assembly, monomer. Homodimer. Only the homodimer shows catalytic activity. Interacts with nsp8 and nsp12 to form the replication-transcription complex (RTC): nsp12, nsp7, two subunits of nsp8, and up to two subunits of nsp13. As to quaternary structure, interacts with nsp7, nsp13 and nsp12 to form the replication-transcription complex (RTC): nsp12, nsp7, two subunits of nsp8, and up to two subunits of nsp13. In terms of assembly, interacts with nsp12. Interacts with proofreading exoribonuclease nsp14 and 2'-O-methyltransferase nsp16; these interactions enhance nsp14 and nsp16 enzymatic activities. As to quaternary structure, interacts with nsp7 and nsp8 to form the replication-transcription complex (RTC): nsp12, nsp7, two subunits of nsp8, and up to two subunits of nsp13. Interacts with nsp9. In terms of assembly, interacts with nsp8 to form the replication-transcription complex (RTC): nsp12, nsp7, two subunits of nsp8, and up to two subunits of nsp13. Mn(2+) is required as a cofactor. Mg(2+) serves as cofactor. Specific enzymatic cleavages in vivo by its own proteases yield mature proteins. 3CL-PRO and PL-PRO proteinases are autocatalytically processed.

It localises to the host membrane. It is found in the host cytoplasm. The protein localises to the host perinuclear region. The protein resides in the host endoplasmic reticulum-Golgi intermediate compartment. It carries out the reaction RNA(n) + a ribonucleoside 5'-triphosphate = RNA(n+1) + diphosphate. It catalyses the reaction ATP + H2O = ADP + phosphate + H(+). The catalysed reaction is Thiol-dependent hydrolysis of ester, thioester, amide, peptide and isopeptide bonds formed by the C-terminal Gly of ubiquitin (a 76-residue protein attached to proteins as an intracellular targeting signal).. The enzyme catalyses a 5'-end (N(7)-methyl 5'-triphosphoguanosine)-ribonucleoside in mRNA + S-adenosyl-L-methionine = a 5'-end (N(7)-methyl 5'-triphosphoguanosine)-(2'-O-methyl-ribonucleoside) in mRNA + S-adenosyl-L-homocysteine + H(+). It carries out the reaction uridylyl-uridylyl-ribonucleotide-RNA = a 3'-end uridylyl-2',3'-cyclophospho-uridine-RNA + a 5'-end dephospho-ribonucleoside-RNA. It catalyses the reaction a 5'-end diphospho-ribonucleoside in mRNA + GTP + H(+) = a 5'-end (5'-triphosphoguanosine)-ribonucleoside in mRNA + diphosphate. The catalysed reaction is a 5'-end (5'-triphosphoguanosine)-ribonucleoside in mRNA + S-adenosyl-L-methionine = a 5'-end (N(7)-methyl 5'-triphosphoguanosine)-ribonucleoside in mRNA + S-adenosyl-L-homocysteine. Its function is as follows. The replicase polyprotein of coronaviruses is a multifunctional protein: it contains the activities necessary for the transcription of negative stranded RNA, leader RNA, subgenomic mRNAs and progeny virion RNA as well as proteinases responsible for the cleavage of the polyprotein into functional products. In terms of biological role, inhibits host translation by interacting with the 40S ribosomal subunit. The nsp1-40S ribosome complex further induces an endonucleolytic cleavage near the 5'UTR of host mRNAs, targeting them for degradation. Viral mRNAs are not susceptible to nsp1-mediated endonucleolytic RNA cleavage thanks to the presence of a 5'-end leader sequence and are therefore protected from degradation. By suppressing host gene expression, nsp1 facilitates efficient viral gene expression in infected cells and evasion from host immune response. May play a role in the modulation of host cell survival signaling pathway by interacting with host PHB and PHB2. Indeed, these two proteins play a role in maintaining the functional integrity of the mitochondria and protecting cells from various stresses. Functionally, responsible for the cleavages located at the N-terminus of the replicase polyprotein. In addition, PL-PRO possesses a deubiquitinating/deISGylating activity and processes both 'Lys-48'- and 'Lys-63'-linked polyubiquitin chains from cellular substrates. Participates together with nsp4 in the assembly of virally-induced cytoplasmic double-membrane vesicles necessary for viral replication. Antagonizes innate immune induction of type I interferon by blocking the phosphorylation, dimerization and subsequent nuclear translocation of host IRF3. Also prevents host NF-kappa-B signaling. Its function is as follows. Participates in the assembly of virally-induced cytoplasmic double-membrane vesicles necessary for viral replication. In terms of biological role, cleaves the C-terminus of replicase polyprotein at 11 sites. Recognizes substrates containing the core sequence [ILMVF]-Q-|-[SGACN]. Also able to bind an ADP-ribose-1''-phosphate (ADRP). Plays a role in the initial induction of autophagosomes from host endoplasmic reticulum. Later, limits the expansion of these phagosomes that are no longer able to deliver viral components to lysosomes. Functionally, forms a hexadecamer with nsp8 (8 subunits of each) that may participate in viral replication by acting as a primase. Alternatively, may synthesize substantially longer products than oligonucleotide primers. Its function is as follows. Forms a hexadecamer with nsp7 (8 subunits of each) that may participate in viral replication by acting as a primase. Alternatively, may synthesize substantially longer products than oligonucleotide primers. In terms of biological role, forms a primer, NSP9-pU, which is utilized by the polymerase for the initiation of RNA chains. Interacts with ribosome signal recognition particle RNA (SRP). Together with NSP8, suppress protein integration into the cell membrane, thereby disrupting host immune defenses. Plays a pivotal role in viral transcription by stimulating both nsp14 3'-5' exoribonuclease and nsp16 2'-O-methyltransferase activities. Therefore plays an essential role in viral mRNAs cap methylation. Functionally, RNA-directed RNA polymerase that catalyzes the transcription of viral genomic and subgenomic RNAs. Acts in complex with nsp7 and nsp8 to transcribe both the minus and positive strands of genomic RNA. The kinase-like NiRAN domain of NSP12 attaches one or more nucleotides to the amino terminus of NSP9, forming a covalent RNA-protein intermediate that serves as transcription/replication primer. Subgenomic RNAs (sgRNAs) are formed by discontinuous transcription: The polymerase has the ability to pause at transcription-regulating sequences (TRS) and jump to the leader TRS, resulting in a major deletion. This creates a series of subgenomic RNAs that are replicated, transcribed and translated. In addition, Nsp12 is a subunit of the viral RNA capping enzyme that catalyzes the RNA guanylyltransferase reaction for genomic and sub-genomic RNAs. Subsequently, the NiRAN domain transfers RNA to GDP, and forms the core cap structure GpppA-RNA. Its function is as follows. Multi-functional protein with a zinc-binding domain in N-terminus displaying RNA and DNA duplex-unwinding activities with 5' to 3' polarity. Activity of helicase is dependent on magnesium. In terms of biological role, plays a role in viral RNA synthesis through two distinct activities. The N7-guanine methyltransferase activity plays a role in the formation of the cap structure GpppA-RNA. The proofreading exoribonuclease reduces the sensitivity of the virus to RNA mutagens during replication. This activity acts on both ssRNA and dsRNA in a 3'-5' direction. Plays a role in viral transcription/replication and prevents the simultaneous activation of host cell dsRNA sensors, such as MDA5/IFIH1, OAS, and PKR. Acts by degrading the 5'-polyuridines generated during replication of the poly(A) region of viral genomic and subgenomic RNAs. Catalyzes a two-step reaction in which a 2'3'-cyclic phosphate (2'3'-cP) is first generated by 2'-O transesterification, which is then hydrolyzed to a 3'-phosphate (3'-P). If not degraded, poly(U) RNA would hybridize with poly(A) RNA tails and activate host dsRNA sensors. Functionally, methyltransferase that mediates mRNA cap 2'-O-ribose methylation to the 5'-cap structure of viral mRNAs. N7-methyl guanosine cap is a prerequisite for binding of nsp16. Therefore plays an essential role in viral mRNAs cap methylation which is essential to evade immune system. The protein is Replicase polyprotein 1ab (rep) of Bos taurus (Bovine).